The following is a 184-amino-acid chain: Protein DESIGUAL 3 (184 aa).

Residues 1 to 24 form the signal peptide; sequence MESELGFLVSVVIICADITATVLG. Basic residues predominate over residues 34 to 45; sequence APHHHHQQHSRH. Residues 34–53 are disordered; that stretch reads APHHHHQQHSRHSGSGCRRS. 3 consecutive transmembrane segments (helical) span residues 62–82, 99–119, and 140–160; these read GVAA…LGGC, ILAV…YSTL, and FFLI…AYYV. Residue N180 is glycosylated (N-linked (GlcNAc...) asparagine).

Belongs to the DESIGUAL family. Mainly expressed in roots, inflorescences and developing leaves, and, at low levels, in mature leaves.

The protein localises to the endoplasmic reticulum membrane. In terms of biological role, involved, partially redundantly with VCC/DEAL1 and DEAL2, to ensure bilateral symmetry development and early leaf margin patterning, probably via the regulation of auxin and CUC2 distribution. The chain is Protein DESIGUAL 3 from Arabidopsis thaliana (Mouse-ear cress).